Here is a 355-residue protein sequence, read N- to C-terminus: UDP-N-acetylglucosamine--N-acetylmuramyl-(pentapeptide) pyrophosphoryl-undecaprenol N-acetylglucosamine transferase (355 aa).

Residues 15 to 17, Asn127, Arg163, Ser191, Ile244, 263 to 268, and Gln288 each bind UDP-N-acetyl-alpha-D-glucosamine; these read TGG and ALTVSE.

It belongs to the glycosyltransferase 28 family. MurG subfamily.

It is found in the cell inner membrane. The catalysed reaction is di-trans,octa-cis-undecaprenyl diphospho-N-acetyl-alpha-D-muramoyl-L-alanyl-D-glutamyl-meso-2,6-diaminopimeloyl-D-alanyl-D-alanine + UDP-N-acetyl-alpha-D-glucosamine = di-trans,octa-cis-undecaprenyl diphospho-[N-acetyl-alpha-D-glucosaminyl-(1-&gt;4)]-N-acetyl-alpha-D-muramoyl-L-alanyl-D-glutamyl-meso-2,6-diaminopimeloyl-D-alanyl-D-alanine + UDP + H(+). The protein operates within cell wall biogenesis; peptidoglycan biosynthesis. Its function is as follows. Cell wall formation. Catalyzes the transfer of a GlcNAc subunit on undecaprenyl-pyrophosphoryl-MurNAc-pentapeptide (lipid intermediate I) to form undecaprenyl-pyrophosphoryl-MurNAc-(pentapeptide)GlcNAc (lipid intermediate II). In Escherichia coli O139:H28 (strain E24377A / ETEC), this protein is UDP-N-acetylglucosamine--N-acetylmuramyl-(pentapeptide) pyrophosphoryl-undecaprenol N-acetylglucosamine transferase.